A 358-amino-acid chain; its full sequence is Aromatic amino acid aminotransferase (358 aa).

Position 222 is an N6-(pyridoxal phosphate)lysine (lysine 222).

This sequence belongs to the class-II pyridoxal-phosphate-dependent aminotransferase family. Homodimer. It depends on pyridoxal 5'-phosphate as a cofactor.

The catalysed reaction is an aromatic L-alpha-amino acid + 2-oxoglutarate = an aromatic oxo-acid + L-glutamate. Its function is as follows. Aminotransferase that catalyzes the conversion of aromatic amino acids and 2-oxoglutarate into corresponding aromatic oxo acids and L-glutamate. This Mycobacterium sp. (strain JLS) protein is Aromatic amino acid aminotransferase.